A 345-amino-acid polypeptide reads, in one-letter code: Class I histocompatibility antigen, F10 alpha chain (345 aa).

A signal peptide spans 1 to 22 (MGPCGALGLGLLLAAVCGAAAP). The segment at 23 to 110 (ELHTLRYIQT…ILQRRYNQTG (88 aa)) is alpha-1. At 23 to 301 (ELHTLRYIQT…WEPPQPNLVP (279 aa)) the chain is on the extracellular side. N-linked (GlcNAc...) asparagine glycosylation is found at asparagine 59 and asparagine 107. The segment at 111-201 (GSHTVQWMYG…EYGKAELGRR (91 aa)) is alpha-2. Cystine bridges form between cysteine 121–cysteine 183 and cysteine 221–cysteine 277. Residues 202-292 (ERPEVRVWGK…SLPQPGLYSW (91 aa)) are alpha-3. Positions 204–293 (PEVRVWGKEA…LPQPGLYSWE (90 aa)) constitute an Ig-like C1-type domain. A connecting peptide region spans residues 293–301 (EPPQPNLVP). Residues 302–324 (IVAGVAVAIVAIAIMVGVGFIIY) form a helical membrane-spanning segment. The Cytoplasmic portion of the chain corresponds to 325–345 (RRHAGKKGKGYNIAPGSNPAI).

This sequence belongs to the MHC class I family. As to quaternary structure, heterodimer of an alpha chain and a beta chain (beta-2-microglobulin).

The protein localises to the membrane. Involved in the presentation of foreign antigens to the immune system. This is Class I histocompatibility antigen, F10 alpha chain from Gallus gallus (Chicken).